A 500-amino-acid chain; its full sequence is Glycerol-3-phosphate acyltransferase 7 (500 aa).

Transmembrane regions (helical) follow at residues 38-58 and 235-255; these read GLIRFATLLFLWPIIALLDVL and ALIILLWIPFGIILAMIRIFV. Residues 298–303 carry the HXXXXD motif motif; that stretch reads HRTLMD.

This sequence belongs to the GPAT/DAPAT family. Weakly or not expressed in roots, leaves, seedlings, developing siliques and flower buds.

It is found in the membrane. It catalyses the reaction sn-glycerol 3-phosphate + an acyl-CoA = a 1-acyl-sn-glycero-3-phosphate + CoA. It participates in phospholipid metabolism; CDP-diacylglycerol biosynthesis; CDP-diacylglycerol from sn-glycerol 3-phosphate: step 1/3. Its function is as follows. Esterifies acyl-group from acyl-ACP to the sn-1 position of glycerol-3-phosphate, an essential step in glycerolipid biosynthesis. This Arabidopsis thaliana (Mouse-ear cress) protein is Glycerol-3-phosphate acyltransferase 7 (GPAT7).